The primary structure comprises 183 residues: Large ribosomal subunit protein uL10 (183 aa).

The protein belongs to the universal ribosomal protein uL10 family. Part of the ribosomal stalk of the 50S ribosomal subunit. The N-terminus interacts with L11 and the large rRNA to form the base of the stalk. The C-terminus forms an elongated spine to which L12 dimers bind in a sequential fashion forming a multimeric L10(L12)X complex.

Functionally, forms part of the ribosomal stalk, playing a central role in the interaction of the ribosome with GTP-bound translation factors. The sequence is that of Large ribosomal subunit protein uL10 from Mesomycoplasma hyopneumoniae (strain 232) (Mycoplasma hyopneumoniae).